A 113-amino-acid polypeptide reads, in one-letter code: Protein SPIRAL1-like 1 (113 aa).

Residues Met-1–Ser-12 are compositionally biased toward gly residues. Positions Met-1–Val-50 are disordered. The span at Ala-23–Pro-34 shows a compositional bias: low complexity. Ser-69 bears the Phosphoserine mark. Positions Gln-79–Asn-113 are disordered. The segment covering Pro-97–Asn-113 has biased composition (gly residues).

It belongs to the SPIRAL1 family. In terms of tissue distribution, detected in pollen of mature flowers.

Acts redundantly with SPR1 in maintaining the cortical microtubules organization essential for anisotropic cell growth. The protein is Protein SPIRAL1-like 1 (SP1L1) of Arabidopsis thaliana (Mouse-ear cress).